We begin with the raw amino-acid sequence, 148 residues long: Homoprotocatechuate degradative operon repressor (148 aa).

The HTH marR-type domain occupies 2–134 (HDSLTIALLQ…LTHLLEEFIA (133 aa)).

In terms of biological role, repressor for the homoprotocatechuate catabolic pathway hpc operon. The protein is Homoprotocatechuate degradative operon repressor (hpcR) of Escherichia coli.